A 365-amino-acid chain; its full sequence is WAT1-related protein At1g01070 (365 aa).

10 consecutive transmembrane segments (helical) span residues 14 to 34 (YSPV…NALV), 46 to 66 (VIGA…AYVL), 83 to 103 (FVSG…GLSY), 107 to 127 (TVSC…ALIF), 139 to 159 (AGML…FLTF), 189 to 209 (WLLG…WMLF), 221 to 241 (YSST…LSLY), 255 to 275 (FVIT…TVAT), 285 to 305 (VFAS…DFLI), and 310 to 330 (LYLG…MFLW). Positions 27 to 157 (MGSVNALVKK…LICISGALFL (131 aa)) constitute an EamA 1 domain. The EamA 2 domain occupies 223–329 (STCLMSIFAA…VTITGLYMFL (107 aa)). Polar residues predominate over residues 340-356 (TALSSGMDNEAQYTTPN). Positions 340-365 (TALSSGMDNEAQYTTPNKDNDSKSPV) are disordered.

It belongs to the drug/metabolite transporter (DMT) superfamily. Plant drug/metabolite exporter (P-DME) (TC 2.A.7.4) family.

The protein localises to the membrane. This is WAT1-related protein At1g01070 from Arabidopsis thaliana (Mouse-ear cress).